A 256-amino-acid chain; its full sequence is Type III pantothenate kinase (256 aa).

ATP is bound at residue 6–13 (DVGNSNIV). Substrate is bound by residues Tyr-100 and 107 to 110 (GADR). Asp-109 (proton acceptor) is an active-site residue. Asp-129 contributes to the K(+) binding site. Residue Thr-132 participates in ATP binding. Thr-184 contacts substrate.

The protein belongs to the type III pantothenate kinase family. As to quaternary structure, homodimer. NH4(+) is required as a cofactor. The cofactor is K(+).

Its subcellular location is the cytoplasm. The catalysed reaction is (R)-pantothenate + ATP = (R)-4'-phosphopantothenate + ADP + H(+). It functions in the pathway cofactor biosynthesis; coenzyme A biosynthesis; CoA from (R)-pantothenate: step 1/5. In terms of biological role, catalyzes the phosphorylation of pantothenate (Pan), the first step in CoA biosynthesis. The chain is Type III pantothenate kinase from Geotalea daltonii (strain DSM 22248 / JCM 15807 / FRC-32) (Geobacter daltonii).